Here is a 258-residue protein sequence, read N- to C-terminus: Imidazole glycerol phosphate synthase subunit HisF (258 aa).

Active-site residues include Asp-12 and Asp-131.

This sequence belongs to the HisA/HisF family. In terms of assembly, heterodimer of HisH and HisF.

It is found in the cytoplasm. It carries out the reaction 5-[(5-phospho-1-deoxy-D-ribulos-1-ylimino)methylamino]-1-(5-phospho-beta-D-ribosyl)imidazole-4-carboxamide + L-glutamine = D-erythro-1-(imidazol-4-yl)glycerol 3-phosphate + 5-amino-1-(5-phospho-beta-D-ribosyl)imidazole-4-carboxamide + L-glutamate + H(+). It functions in the pathway amino-acid biosynthesis; L-histidine biosynthesis; L-histidine from 5-phospho-alpha-D-ribose 1-diphosphate: step 5/9. Functionally, IGPS catalyzes the conversion of PRFAR and glutamine to IGP, AICAR and glutamate. The HisF subunit catalyzes the cyclization activity that produces IGP and AICAR from PRFAR using the ammonia provided by the HisH subunit. This chain is Imidazole glycerol phosphate synthase subunit HisF, found in Nitrosomonas eutropha (strain DSM 101675 / C91 / Nm57).